We begin with the raw amino-acid sequence, 250 residues long: Silencing boundary-establishment protein FUB1 (250 aa).

The disordered stretch occupies residues 179 to 250; it reads PDWSGGLPNP…GFGGSGSGFI (72 aa). Over residues 202–213 the composition is skewed to basic and acidic residues; sequence PNRRPAPRREDM. The span at 229 to 250 shows a compositional bias: gly residues; that stretch reads PGSGGFGGSGSGGFGGSGSGFI.

Belongs to the proteasome inhibitor PI31 family. In terms of assembly, interacts with the 20S proteasome.

Functionally, plays a role in the establishment of transcriptional silencing boundaries, preventing the propagation of heterochromatic silencing. The chain is Silencing boundary-establishment protein FUB1 from Saccharomyces cerevisiae (strain ATCC 204508 / S288c) (Baker's yeast).